Consider the following 210-residue polypeptide: dTTP/UTP pyrophosphatase (210 aa).

Residues 1–15 show a composition bias toward basic and acidic residues; the sequence is MTHGDNRDGPGRETR. The interval 1 to 22 is disordered; the sequence is MTHGDNRDGPGRETRSSGPLVL. D86 serves as the catalytic Proton acceptor.

This sequence belongs to the Maf family. YhdE subfamily. Requires a divalent metal cation as cofactor.

The protein localises to the cytoplasm. The catalysed reaction is dTTP + H2O = dTMP + diphosphate + H(+). It catalyses the reaction UTP + H2O = UMP + diphosphate + H(+). Nucleoside triphosphate pyrophosphatase that hydrolyzes dTTP and UTP. May have a dual role in cell division arrest and in preventing the incorporation of modified nucleotides into cellular nucleic acids. The chain is dTTP/UTP pyrophosphatase from Rhodospirillum rubrum (strain ATCC 11170 / ATH 1.1.1 / DSM 467 / LMG 4362 / NCIMB 8255 / S1).